The primary structure comprises 505 residues: ATP synthase subunit beta (505 aa).

Residues 1 to 25 (MAKAATPKETAAVKKPAAPKKAATA) are disordered. 183-190 (GGAGVGKT) is an ATP binding site.

It belongs to the ATPase alpha/beta chains family. F-type ATPases have 2 components, CF(1) - the catalytic core - and CF(0) - the membrane proton channel. CF(1) has five subunits: alpha(3), beta(3), gamma(1), delta(1), epsilon(1). CF(0) has three main subunits: a(1), b(2) and c(9-12). The alpha and beta chains form an alternating ring which encloses part of the gamma chain. CF(1) is attached to CF(0) by a central stalk formed by the gamma and epsilon chains, while a peripheral stalk is formed by the delta and b chains.

The protein localises to the cell inner membrane. It catalyses the reaction ATP + H2O + 4 H(+)(in) = ADP + phosphate + 5 H(+)(out). Functionally, produces ATP from ADP in the presence of a proton gradient across the membrane. The catalytic sites are hosted primarily by the beta subunits. The sequence is that of ATP synthase subunit beta from Sinorhizobium fredii (strain NBRC 101917 / NGR234).